The sequence spans 205 residues: Holliday junction branch migration complex subunit RuvA (205 aa).

Residues 1–64 (MIGRLRGTLA…EDAHLLYGFA (64 aa)) form a domain I region. Positions 65–143 (EKRERELFRE…AWETSPAMFT (79 aa)) are domain II. A flexible linker region spans residues 144 to 154 (LVSDGPLPVAS). Positions 154–205 (SESSAEADAVSALVSLGYKPQEASKAIAAIKDKAGLSSEELIRRSLKGMIAK) are domain III.

Belongs to the RuvA family. Homotetramer. Forms an RuvA(8)-RuvB(12)-Holliday junction (HJ) complex. HJ DNA is sandwiched between 2 RuvA tetramers; dsDNA enters through RuvA and exits via RuvB. An RuvB hexamer assembles on each DNA strand where it exits the tetramer. Each RuvB hexamer is contacted by two RuvA subunits (via domain III) on 2 adjacent RuvB subunits; this complex drives branch migration. In the full resolvosome a probable DNA-RuvA(4)-RuvB(12)-RuvC(2) complex forms which resolves the HJ.

The protein resides in the cytoplasm. Its function is as follows. The RuvA-RuvB-RuvC complex processes Holliday junction (HJ) DNA during genetic recombination and DNA repair, while the RuvA-RuvB complex plays an important role in the rescue of blocked DNA replication forks via replication fork reversal (RFR). RuvA specifically binds to HJ cruciform DNA, conferring on it an open structure. The RuvB hexamer acts as an ATP-dependent pump, pulling dsDNA into and through the RuvAB complex. HJ branch migration allows RuvC to scan DNA until it finds its consensus sequence, where it cleaves and resolves the cruciform DNA. The protein is Holliday junction branch migration complex subunit RuvA of Pseudomonas entomophila (strain L48).